We begin with the raw amino-acid sequence, 376 residues long: Tetraacyldisaccharide 4'-kinase (376 aa).

51–58 is a binding site for ATP; the sequence is AVGGTGKT.

It belongs to the LpxK family.

It catalyses the reaction a lipid A disaccharide + ATP = a lipid IVA + ADP + H(+). The protein operates within glycolipid biosynthesis; lipid IV(A) biosynthesis; lipid IV(A) from (3R)-3-hydroxytetradecanoyl-[acyl-carrier-protein] and UDP-N-acetyl-alpha-D-glucosamine: step 6/6. Transfers the gamma-phosphate of ATP to the 4'-position of a tetraacyldisaccharide 1-phosphate intermediate (termed DS-1-P) to form tetraacyldisaccharide 1,4'-bis-phosphate (lipid IVA). In Bacteroides fragilis (strain YCH46), this protein is Tetraacyldisaccharide 4'-kinase.